The primary structure comprises 122 residues: Small ribosomal subunit protein bS16 (122 aa).

Positions 81 to 122 (GLMKRDAKNNPKKGEPGEKAKERAKERAEKAAAGSTEDAAAE) are disordered. Residues 83–110 (MKRDAKNNPKKGEPGEKAKERAKERAEK) are compositionally biased toward basic and acidic residues. The span at 111-122 (AAAGSTEDAAAE) shows a compositional bias: low complexity.

The protein belongs to the bacterial ribosomal protein bS16 family.

The polypeptide is Small ribosomal subunit protein bS16 (Xanthobacter autotrophicus (strain ATCC BAA-1158 / Py2)).